We begin with the raw amino-acid sequence, 552 residues long: Membrane protein insertase YidC (552 aa).

5 helical membrane passes run 7–24, 364–384, 434–454, 473–493, and 508–528; these read VLWV…DNWQ, WGWA…PLSA, LPVV…LASV, PFFI…SLNP, and PIAF…YYVV.

This sequence belongs to the OXA1/ALB3/YidC family. Type 1 subfamily. Interacts with the Sec translocase complex via SecD. Specifically interacts with transmembrane segments of nascent integral membrane proteins during membrane integration.

The protein localises to the cell inner membrane. Functionally, required for the insertion and/or proper folding and/or complex formation of integral membrane proteins into the membrane. Involved in integration of membrane proteins that insert both dependently and independently of the Sec translocase complex, as well as at least some lipoproteins. Aids folding of multispanning membrane proteins. The chain is Membrane protein insertase YidC from Burkholderia cenocepacia (strain HI2424).